We begin with the raw amino-acid sequence, 417 residues long: Probable pectate lyase 20 (417 aa).

A signal peptide spans 1–25; that stretch reads MAVTQILVVFASALLLSMFFTGVDS. Asparagine 29 and asparagine 53 each carry an N-linked (GlcNAc...) asparagine glycan. Ca(2+)-binding residues include aspartate 215, aspartate 239, and aspartate 243. Residue arginine 295 is part of the active site.

It belongs to the polysaccharide lyase 1 family. Ca(2+) is required as a cofactor.

The enzyme catalyses Eliminative cleavage of (1-&gt;4)-alpha-D-galacturonan to give oligosaccharides with 4-deoxy-alpha-D-galact-4-enuronosyl groups at their non-reducing ends.. The protein operates within glycan metabolism; pectin degradation; 2-dehydro-3-deoxy-D-gluconate from pectin: step 2/5. This chain is Probable pectate lyase 20, found in Arabidopsis thaliana (Mouse-ear cress).